A 31-amino-acid polypeptide reads, in one-letter code: Cytochrome b6-f complex subunit 6 (31 aa).

Residues 4–24 (LTSYFGFLLAALTITFVLFIG) traverse the membrane as a helical segment.

Belongs to the PetL family. As to quaternary structure, the 4 large subunits of the cytochrome b6-f complex are cytochrome b6, subunit IV (17 kDa polypeptide, PetD), cytochrome f and the Rieske protein, while the 4 small subunits are PetG, PetL, PetM and PetN. The complex functions as a dimer.

Its subcellular location is the plastid. It is found in the chloroplast thylakoid membrane. In terms of biological role, component of the cytochrome b6-f complex, which mediates electron transfer between photosystem II (PSII) and photosystem I (PSI), cyclic electron flow around PSI, and state transitions. PetL is important for photoautotrophic growth as well as for electron transfer efficiency and stability of the cytochrome b6-f complex. This is Cytochrome b6-f complex subunit 6 from Oxybasis rubra (Red goosefoot).